A 91-amino-acid chain; its full sequence is Small ribosomal subunit protein uS15 (91 aa).

Belongs to the universal ribosomal protein uS15 family. Part of the 30S ribosomal subunit. Forms a bridge to the 50S subunit in the 70S ribosome, contacting the 23S rRNA.

In terms of biological role, one of the primary rRNA binding proteins, it binds directly to 16S rRNA where it helps nucleate assembly of the platform of the 30S subunit by binding and bridging several RNA helices of the 16S rRNA. Its function is as follows. Forms an intersubunit bridge (bridge B4) with the 23S rRNA of the 50S subunit in the ribosome. This is Small ribosomal subunit protein uS15 from Deinococcus geothermalis (strain DSM 11300 / CIP 105573 / AG-3a).